We begin with the raw amino-acid sequence, 82 residues long: Protein costars (82 aa).

Belongs to the costars family.

Modulates actin dynamics and cell motility. The protein is Protein costars (cosA) of Dictyostelium discoideum (Social amoeba).